Reading from the N-terminus, the 524-residue chain is Phosphoenolpyruvate carboxykinase (ATP) (524 aa).

Arg-52, Tyr-188, and Lys-194 together coordinate substrate. Residues Lys-194, His-213, and 229–237 contribute to the ATP site; that span reads GLSGTGKTT. The Mn(2+) site is built by Lys-194 and His-213. Asp-250 contacts Mn(2+). 3 residues coordinate ATP: Glu-278, Arg-314, and Thr-439. Arg-314 serves as a coordination point for substrate.

It belongs to the phosphoenolpyruvate carboxykinase (ATP) family. Requires Mn(2+) as cofactor.

It localises to the cytoplasm. The catalysed reaction is oxaloacetate + ATP = phosphoenolpyruvate + ADP + CO2. Its pathway is carbohydrate biosynthesis; gluconeogenesis. In terms of biological role, involved in the gluconeogenesis. Catalyzes the conversion of oxaloacetate (OAA) to phosphoenolpyruvate (PEP) through direct phosphoryl transfer between the nucleoside triphosphate and OAA. This Campylobacter jejuni (strain RM1221) protein is Phosphoenolpyruvate carboxykinase (ATP).